The sequence spans 504 residues: Anaerobic nitric oxide reductase transcription regulator NorR (504 aa).

Residue Asp57 is modified to 4-aspartylphosphate. In terms of domain architecture, Sigma-54 factor interaction spans 187–416 (MIGLSPGMTQ…LEHAIHRAVV (230 aa)). ATP is bound by residues 215–222 (GETGTGKE) and 278–287 (ADNGTLFLDE). The segment at residues 479 to 498 (WAACARMLETDVANLHRLAK) is a DNA-binding region (H-T-H motif).

Its pathway is nitrogen metabolism; nitric oxide reduction. Its function is as follows. Required for the expression of anaerobic nitric oxide (NO) reductase, acts as a transcriptional activator for at least the norVW operon. Activation also requires sigma-54. This is Anaerobic nitric oxide reductase transcription regulator NorR from Escherichia coli (strain 55989 / EAEC).